The following is a 112-amino-acid chain: Toxin-like structure LSTX-D10 (112 aa).

Positions 1-20 are cleaved as a signal peptide; it reads MMKVLVVVALLVTLISYSSS. Positions 21–41 are excised as a propeptide; that stretch reads EGIDDLEADELLSLMANEQTR. Cystine bridges form between Cys45/Cys60, Cys52/Cys69, Cys59/Cys84, and Cys71/Cys82.

It belongs to the neurotoxin 19 (CSTX) family. 01 subfamily. Expressed by the venom gland.

Its subcellular location is the secreted. This is Toxin-like structure LSTX-D10 from Lycosa singoriensis (Wolf spider).